Consider the following 211-residue polypeptide: Uracil phosphoribosyltransferase (211 aa).

5-phospho-alpha-D-ribose 1-diphosphate contacts are provided by residues Arg79, Arg104, and 131 to 139 (DPMLATGGS). Uracil contacts are provided by residues Ile196 and 201–203 (GDA). 5-phospho-alpha-D-ribose 1-diphosphate is bound at residue Asp202.

This sequence belongs to the UPRTase family. It depends on Mg(2+) as a cofactor.

It carries out the reaction UMP + diphosphate = 5-phospho-alpha-D-ribose 1-diphosphate + uracil. It functions in the pathway pyrimidine metabolism; UMP biosynthesis via salvage pathway; UMP from uracil: step 1/1. Its activity is regulated as follows. Allosterically activated by GTP. Catalyzes the conversion of uracil and 5-phospho-alpha-D-ribose 1-diphosphate (PRPP) to UMP and diphosphate. This chain is Uracil phosphoribosyltransferase, found in Lactococcus lactis subsp. cremoris (strain MG1363).